We begin with the raw amino-acid sequence, 347 residues long: MALQRSNLEEFLTQTWAQRGLAACMLLPVSAVFGGLSALRRAAYRLGLSKSERLPVPVVVVGNIFVGGTGKTPLTIWLVHVLRQAGYTPGVISRGYGVHNDVPQAVTPQSLAQEVGDEPLLIAYRAECPVMVGRDRVAVATALLAAHPEVDVLLSDDGLQHYRMARDVEIVLFDGRGAGNGWLLPAGPLREPVSRRRDFTVLNGAADAPGLPPDAIRMQLVGMTAEKLNDRSQTSALSSFAASDGKHAPTILAAAGIGNPGRFFGLLRSAGLQFEEMALPDHYDFADNPFAHVKADVILITEKDAVKCRQNEGLRNDTRLWVVPVTAQLDGALAEKIVEKLRGRSIA.

65 to 72 serves as a coordination point for ATP; it reads FVGGTGKT.

It belongs to the LpxK family.

The catalysed reaction is a lipid A disaccharide + ATP = a lipid IVA + ADP + H(+). Its pathway is glycolipid biosynthesis; lipid IV(A) biosynthesis; lipid IV(A) from (3R)-3-hydroxytetradecanoyl-[acyl-carrier-protein] and UDP-N-acetyl-alpha-D-glucosamine: step 6/6. Transfers the gamma-phosphate of ATP to the 4'-position of a tetraacyldisaccharide 1-phosphate intermediate (termed DS-1-P) to form tetraacyldisaccharide 1,4'-bis-phosphate (lipid IVA). This chain is Tetraacyldisaccharide 4'-kinase, found in Janthinobacterium sp. (strain Marseille) (Minibacterium massiliensis).